We begin with the raw amino-acid sequence, 602 residues long: UvrABC system protein C (602 aa).

Positions 15–100 (DQSGVYHYFD…IKQLKPKYNI (86 aa)) constitute a GIY-YIG domain. A UVR domain is found at 206–241 (SKLISRLKERMEKLAENLRFEEAGELRDRIEKIKRI).

This sequence belongs to the UvrC family. Interacts with UvrB in an incision complex.

The protein resides in the cytoplasm. The UvrABC repair system catalyzes the recognition and processing of DNA lesions. UvrC both incises the 5' and 3' sides of the lesion. The N-terminal half is responsible for the 3' incision and the C-terminal half is responsible for the 5' incision. This Wolinella succinogenes (strain ATCC 29543 / DSM 1740 / CCUG 13145 / JCM 31913 / LMG 7466 / NCTC 11488 / FDC 602W) (Vibrio succinogenes) protein is UvrABC system protein C.